We begin with the raw amino-acid sequence, 349 residues long: Protein-glutamate methylesterase/protein-glutamine glutaminase (349 aa).

Positions 5 to 122 constitute a Response regulatory domain; sequence KVLVVDDSAF…SLDLYKVKDE (118 aa). Residue aspartate 56 is modified to 4-aspartylphosphate. In terms of domain architecture, CheB-type methylesterase spans 156–349; it reads ARPQQAIVAI…AAAIVQLIGE (194 aa). Active-site residues include serine 168, histidine 195, and aspartate 291.

This sequence belongs to the CheB family. In terms of processing, phosphorylated by CheA. Phosphorylation of the N-terminal regulatory domain activates the methylesterase activity.

Its subcellular location is the cytoplasm. It catalyses the reaction [protein]-L-glutamate 5-O-methyl ester + H2O = L-glutamyl-[protein] + methanol + H(+). The enzyme catalyses L-glutaminyl-[protein] + H2O = L-glutamyl-[protein] + NH4(+). Functionally, involved in chemotaxis. Part of a chemotaxis signal transduction system that modulates chemotaxis in response to various stimuli. Catalyzes the demethylation of specific methylglutamate residues introduced into the chemoreceptors (methyl-accepting chemotaxis proteins or MCP) by CheR. Also mediates the irreversible deamidation of specific glutamine residues to glutamic acid. This chain is Protein-glutamate methylesterase/protein-glutamine glutaminase, found in Geobacillus kaustophilus (strain HTA426).